The following is a 488-amino-acid chain: N-succinylglutamate 5-semialdehyde dehydrogenase (488 aa).

Position 221 to 226 (221 to 226 (GSSRTG)) interacts with NAD(+). Residues glutamate 244 and cysteine 278 contribute to the active site.

The protein belongs to the aldehyde dehydrogenase family. AstD subfamily.

The enzyme catalyses N-succinyl-L-glutamate 5-semialdehyde + NAD(+) + H2O = N-succinyl-L-glutamate + NADH + 2 H(+). It functions in the pathway amino-acid degradation; L-arginine degradation via AST pathway; L-glutamate and succinate from L-arginine: step 4/5. Catalyzes the NAD-dependent reduction of succinylglutamate semialdehyde into succinylglutamate. The sequence is that of N-succinylglutamate 5-semialdehyde dehydrogenase from Pseudomonas fluorescens (strain SBW25).